A 366-amino-acid polypeptide reads, in one-letter code: Major outer membrane protein (366 aa).

Positions 1–21 (MKKTLLATAIAGAMAASGAQA) are cleaved as a signal peptide.

This sequence belongs to the Gram-negative porin family. As to quaternary structure, homotrimer.

The protein localises to the cell outer membrane. The sequence is that of Major outer membrane protein from Halomonas elongata (strain ATCC 33173 / DSM 2581 / NBRC 15536 / NCIMB 2198 / 1H9).